Here is a 115-residue protein sequence, read N- to C-terminus: Large ribosomal subunit protein bL20 (115 aa).

This sequence belongs to the bacterial ribosomal protein bL20 family.

In terms of biological role, binds directly to 23S ribosomal RNA and is necessary for the in vitro assembly process of the 50S ribosomal subunit. It is not involved in the protein synthesizing functions of that subunit. The chain is Large ribosomal subunit protein bL20 from Chlorobaculum tepidum (strain ATCC 49652 / DSM 12025 / NBRC 103806 / TLS) (Chlorobium tepidum).